The chain runs to 910 residues: DNA repair and recombination protein RAD54B (910 aa).

Polar residues predominate over residues 1 to 14 (MRRSAAPSQLQGNS). Residues 1–33 (MRRSAAPSQLQGNSFKKPKFIPPGRSNPGLNEE) are disordered. Ser14 carries the phosphoserine modification. The region spanning 313-480 (GMRMNGRCGA…FALIDFVNPG (168 aa)) is the Helicase ATP-binding domain. 326-333 (DEMGLGKT) lines the ATP pocket. Positions 431–434 (DEGH) match the DEGH box motif. Residues 649–810 (KLLAVIHELR…HIQFSVEELK (162 aa)) form the Helicase C-terminal domain.

The protein belongs to the SNF2/RAD54 helicase family. As to quaternary structure, interacts with RAD51 through the NH2-terminal domain. Immunoprecipitation experiments show that the interaction is constitutive and not induced by ionizing radiation. The interaction may be indirect. In terms of tissue distribution, abundantly expressed in testis and spleen. Relatively low levels observed in thymus, prostate, ovary and colon.

The protein resides in the nucleus. Functionally, involved in DNA repair and mitotic recombination. May play an active role in recombination processes in concert with other members of the RAD52 epistasis group. The chain is DNA repair and recombination protein RAD54B (RAD54B) from Homo sapiens (Human).